The chain runs to 482 residues: MSAIRPAAVVVLAAGEGTRMKSATPKVLHELCGRSLVGHVLAAAGELDPENLVAVVGHAREKVTAHLAEVAPDVRTAVQEQQNGTGHAVRMGLEAMGGAVDGVVVVVCGDTPLLTGETLKALAATHTADGNAVTVLTAEVPDATGYGRIVRDGASGAVTAIVEHKDASESQRAIREINSGVFAFDGQLLADALGKVRTDNSQGEEYLTDVLGILREAGHRVGASVAGDHREIAGINNRVQLAEARRILNDRLLTGAMLAGVTVVDPATTWVDVTVTFEQDVVVHPGTQLHGTTHLAEGCEVGPNTRLTDTRVEAGARVDNTVANGAHVGPQASVGPYAYLRPGTRLGLKSKIGTFVEAKNSSIGEGTKVPHLSYMGDATVGDFTNIGAASVFVNYDGQDKHHTTIGSHCRTGSDNMFVAPVTVGDGAYTAAGSVITKDVPPGSLAVARGQQRNIEGWVARKRPGSAAAKAAEAVSREADGED.

The pyrophosphorylase stretch occupies residues 1–238; that stretch reads MSAIRPAAVV…HREIAGINNR (238 aa). Residues 12-15, K26, Q79, and 84-85 contribute to the UDP-N-acetyl-alpha-D-glucosamine site; these read LAAG and GT. Position 110 (D110) interacts with Mg(2+). UDP-N-acetyl-alpha-D-glucosamine-binding residues include G147, E163, N178, and N236. N236 lines the Mg(2+) pocket. The segment at 239–259 is linker; the sequence is VQLAEARRILNDRLLTGAMLA. An N-acetyltransferase region spans residues 260–482; sequence GVTVVDPATT…AVSREADGED (223 aa). 2 residues coordinate UDP-N-acetyl-alpha-D-glucosamine: R341 and K359. H371 acts as the Proton acceptor in catalysis. UDP-N-acetyl-alpha-D-glucosamine contacts are provided by Y374 and N385. Acetyl-CoA contacts are provided by residues A388, 394–395, S413, A431, and R448; that span reads NY. A disordered region spans residues 460 to 482; sequence RKRPGSAAAKAAEAVSREADGED. Positions 464–473 are enriched in low complexity; it reads GSAAAKAAEA.

The protein in the N-terminal section; belongs to the N-acetylglucosamine-1-phosphate uridyltransferase family. This sequence in the C-terminal section; belongs to the transferase hexapeptide repeat family. As to quaternary structure, homotrimer. Mg(2+) is required as a cofactor.

The protein localises to the cytoplasm. It carries out the reaction alpha-D-glucosamine 1-phosphate + acetyl-CoA = N-acetyl-alpha-D-glucosamine 1-phosphate + CoA + H(+). It catalyses the reaction N-acetyl-alpha-D-glucosamine 1-phosphate + UTP + H(+) = UDP-N-acetyl-alpha-D-glucosamine + diphosphate. The protein operates within nucleotide-sugar biosynthesis; UDP-N-acetyl-alpha-D-glucosamine biosynthesis; N-acetyl-alpha-D-glucosamine 1-phosphate from alpha-D-glucosamine 6-phosphate (route II): step 2/2. Its pathway is nucleotide-sugar biosynthesis; UDP-N-acetyl-alpha-D-glucosamine biosynthesis; UDP-N-acetyl-alpha-D-glucosamine from N-acetyl-alpha-D-glucosamine 1-phosphate: step 1/1. It participates in bacterial outer membrane biogenesis; LPS lipid A biosynthesis. Catalyzes the last two sequential reactions in the de novo biosynthetic pathway for UDP-N-acetylglucosamine (UDP-GlcNAc). The C-terminal domain catalyzes the transfer of acetyl group from acetyl coenzyme A to glucosamine-1-phosphate (GlcN-1-P) to produce N-acetylglucosamine-1-phosphate (GlcNAc-1-P), which is converted into UDP-GlcNAc by the transfer of uridine 5-monophosphate (from uridine 5-triphosphate), a reaction catalyzed by the N-terminal domain. The chain is Bifunctional protein GlmU from Streptomyces coelicolor (strain ATCC BAA-471 / A3(2) / M145).